A 250-amino-acid chain; its full sequence is Iron-sulfur assembly protein 1 (250 aa).

The disordered stretch occupies residues 54-89 (AADSVSPDSQRPGKKPFKFIVSNQSKSSKASKSPKW). Low complexity predominate over residues 75 to 89 (SNQSKSSKASKSPKW). Cysteine 178, cysteine 242, and cysteine 244 together coordinate Fe cation.

The protein belongs to the HesB/IscA family.

The protein localises to the mitochondrion matrix. Functionally, involved in the assembly of mitochondrial and cytoplasmic iron-sulfur proteins. Probably involved in the binding of an intermediate of Fe/S cluster assembly. The chain is Iron-sulfur assembly protein 1 (ISA1) from Saccharomyces cerevisiae (strain ATCC 204508 / S288c) (Baker's yeast).